The primary structure comprises 320 residues: Heptaprenyl diphosphate synthase component 2 (320 aa).

Residues lysine 45, arginine 48, and histidine 77 each coordinate isopentenyl diphosphate. Mg(2+) contacts are provided by aspartate 84 and aspartate 88. Arginine 93 serves as a coordination point for all-trans-hexaprenyl diphosphate. Arginine 94 serves as a coordination point for isopentenyl diphosphate. All-trans-hexaprenyl diphosphate-binding residues include lysine 170, threonine 171, and glutamine 208.

The protein belongs to the FPP/GGPP synthase family. Heterodimer of component I and II. Requires Mg(2+) as cofactor.

The catalysed reaction is 4 isopentenyl diphosphate + (2E,6E)-farnesyl diphosphate = all-trans-heptaprenyl diphosphate + 4 diphosphate. Functionally, supplies heptaprenyl diphosphate, the precursor for the side chain of the isoprenoid quinone menaquinone-7 (MQ-7). This Geobacillus stearothermophilus (Bacillus stearothermophilus) protein is Heptaprenyl diphosphate synthase component 2 (hepT).